The primary structure comprises 402 residues: Leucine aminopeptidase 1 (402 aa).

The N-terminal stretch at 1 to 18 (MKISNASLLALLLPAASA) is a signal peptide. The propeptide occupies 19–92 (RFVEQAEQNR…GTFNKRPYKK (74 aa)). 2 N-linked (GlcNAc...) asparagine glycosylation sites follow: N111 and N184. Zn(2+)-binding residues include H192, D211, E250, and D277. Residue N304 is glycosylated (N-linked (GlcNAc...) asparagine). A disulfide bond links C326 and C330. H359 serves as a coordination point for Zn(2+).

It belongs to the peptidase M28 family. M28E subfamily. In terms of assembly, monomer. The cofactor is Zn(2+).

The protein resides in the secreted. Functionally, extracellular aminopeptidase that allows assimilation of proteinaceous substrates. The protein is Leucine aminopeptidase 1 (lap1) of Neurospora crassa (strain ATCC 24698 / 74-OR23-1A / CBS 708.71 / DSM 1257 / FGSC 987).